The sequence spans 343 residues: S-adenosylmethionine:tRNA ribosyltransferase-isomerase (343 aa).

The protein belongs to the QueA family. In terms of assembly, monomer.

Its subcellular location is the cytoplasm. It catalyses the reaction 7-aminomethyl-7-carbaguanosine(34) in tRNA + S-adenosyl-L-methionine = epoxyqueuosine(34) in tRNA + adenine + L-methionine + 2 H(+). It participates in tRNA modification; tRNA-queuosine biosynthesis. In terms of biological role, transfers and isomerizes the ribose moiety from AdoMet to the 7-aminomethyl group of 7-deazaguanine (preQ1-tRNA) to give epoxyqueuosine (oQ-tRNA). This chain is S-adenosylmethionine:tRNA ribosyltransferase-isomerase, found in Coxiella burnetii (strain Dugway 5J108-111).